The chain runs to 158 residues: Cyclic pyranopterin monophosphate synthase (158 aa).

Residues 76-78 (LCH) and 114-115 (ME) contribute to the substrate site. The active site involves D129.

The protein belongs to the MoaC family. As to quaternary structure, homohexamer; trimer of dimers.

It catalyses the reaction (8S)-3',8-cyclo-7,8-dihydroguanosine 5'-triphosphate = cyclic pyranopterin phosphate + diphosphate. It functions in the pathway cofactor biosynthesis; molybdopterin biosynthesis. Functionally, catalyzes the conversion of (8S)-3',8-cyclo-7,8-dihydroguanosine 5'-triphosphate to cyclic pyranopterin monophosphate (cPMP). This Shewanella piezotolerans (strain WP3 / JCM 13877) protein is Cyclic pyranopterin monophosphate synthase.